Here is a 298-residue protein sequence, read N- to C-terminus: UDP-N-acetylenolpyruvoylglucosamine reductase (298 aa).

Residues 27–206 (VGGPAQRLYR…QQQIRRLLRQ (180 aa)) form the FAD-binding PCMH-type domain. Arg-171 is an active-site residue. Ser-220 (proton donor) is an active-site residue. Residue Glu-290 is part of the active site.

Belongs to the MurB family. FAD serves as cofactor.

Its subcellular location is the cytoplasm. It carries out the reaction UDP-N-acetyl-alpha-D-muramate + NADP(+) = UDP-N-acetyl-3-O-(1-carboxyvinyl)-alpha-D-glucosamine + NADPH + H(+). It functions in the pathway cell wall biogenesis; peptidoglycan biosynthesis. Functionally, cell wall formation. The chain is UDP-N-acetylenolpyruvoylglucosamine reductase from Nitrosococcus oceani (strain ATCC 19707 / BCRC 17464 / JCM 30415 / NCIMB 11848 / C-107).